Consider the following 505-residue polypeptide: ATP synthase subunit alpha (505 aa).

170-177 (GDRQTGKT) contacts ATP.

The protein belongs to the ATPase alpha/beta chains family. In terms of assembly, F-type ATPases have 2 components, CF(1) - the catalytic core - and CF(0) - the membrane proton channel. CF(1) has five subunits: alpha(3), beta(3), gamma(1), delta(1), epsilon(1). CF(0) has four main subunits: a(1), b(1), b'(1) and c(9-12).

The protein localises to the cellular thylakoid membrane. The enzyme catalyses ATP + H2O + 4 H(+)(in) = ADP + phosphate + 5 H(+)(out). Produces ATP from ADP in the presence of a proton gradient across the membrane. The alpha chain is a regulatory subunit. The polypeptide is ATP synthase subunit alpha (Prochlorococcus marinus (strain MIT 9303)).